A 346-amino-acid polypeptide reads, in one-letter code: Tubulin-specific chaperone C (346 aa).

Met1 carries the post-translational modification N-acetylmethionine. A disordered region spans residues 1–26 (MESVSCSAAAVRTGDMESQRDLSLVP). Residues Ser80 and Ser168 each carry the phosphoserine modification. The tract at residues 140 to 171 (KTRGKDAASSTKVDAAPGIPPAVESIQDSPLP) is disordered. Residues 171 to 323 (PKKAEGDLGP…NWNDVDDFNW (153 aa)) form the C-CAP/cofactor C-like domain.

This sequence belongs to the TBCC family. Supercomplex made of cofactors A to E. Cofactors A and D function by capturing and stabilizing tubulin in a quasi-native conformation. Cofactor E binds to the cofactor D-tubulin complex; interaction with cofactor C then causes the release of tubulin polypeptides that are committed to the native state. Expressed in the retina. Expressed in the rod and cone photoreceptors, extending from the inner segments (IS), through the outer nuclear layer (ONL) and into the synapses in the outer plexiform layer (OPL). Strongly expressed to the photoreceptor connecting cilium at the tips of the IS (at protein level).

It localises to the cytoplasm. In terms of biological role, tubulin-folding protein; involved in the final step of the tubulin folding pathway. The chain is Tubulin-specific chaperone C (TBCC) from Homo sapiens (Human).